Here is a 276-residue protein sequence, read N- to C-terminus: Rhomboid protease GlpG (276 aa).

6 helical membrane-spanning segments follow: residues 94–114 (GPVT…MQIL), 142–162 (ALMH…WYLG), 169–189 (LGSG…GYVQ), 192–212 (FSGP…GYVW), 229–249 (LIIF…GMSM), and 250–270 (ANGA…VDSL). Catalysis depends on serine 201, which acts as the Nucleophile. Histidine 254 is an active-site residue.

The protein belongs to the peptidase S54 family.

The protein localises to the cell inner membrane. The catalysed reaction is Cleaves type-1 transmembrane domains using a catalytic dyad composed of serine and histidine that are contributed by different transmembrane domains.. Functionally, rhomboid-type serine protease that catalyzes intramembrane proteolysis. The polypeptide is Rhomboid protease GlpG (Escherichia coli O45:K1 (strain S88 / ExPEC)).